The following is a 46-amino-acid chain: Antimicrobial peptide eNAP-2 (46 aa).

Positions 12–46 constitute a WAP domain; the sequence is RPGRCPTVPPGTFGHCACLCTGDASEPKGQKCCSN.

Has antibiotic activity against several equine uterine pathogens; S.zooepidemicus, E.coli and P.aeruginosa. Highly efficient against S.zoopedemicus. Not active against K.pneumoniae. Selectively inactivates microbial serine proteases (subtilisin A and proteinase K) without inhibiting mammalian serine proteases (human neutrophil elastase, human cathepsin G and bovine pancreatic trypsin). In Equus caballus (Horse), this protein is Antimicrobial peptide eNAP-2.